The primary structure comprises 141 residues: Large ribosomal subunit protein uL11 (141 aa).

It belongs to the universal ribosomal protein uL11 family. Part of the ribosomal stalk of the 50S ribosomal subunit. Interacts with L10 and the large rRNA to form the base of the stalk. L10 forms an elongated spine to which L12 dimers bind in a sequential fashion forming a multimeric L10(L12)X complex. In terms of processing, one or more lysine residues are methylated.

In terms of biological role, forms part of the ribosomal stalk which helps the ribosome interact with GTP-bound translation factors. In Clostridium kluyveri (strain ATCC 8527 / DSM 555 / NBRC 12016 / NCIMB 10680 / K1), this protein is Large ribosomal subunit protein uL11.